Consider the following 576-residue polypeptide: 2-isopropylmalate synthase (576 aa).

A Pyruvate carboxyltransferase domain is found at 31–305 (PIWMSTDLRD…DPGLDFSHVN (275 aa)). Mg(2+)-binding residues include D40, H244, H246, and N280. The segment at 437 to 576 (ADGPIGYVSH…RGMAPSMELA (140 aa)) is regulatory domain.

The protein belongs to the alpha-IPM synthase/homocitrate synthase family. LeuA type 2 subfamily. In terms of assembly, homodimer. It depends on Mg(2+) as a cofactor.

It localises to the cytoplasm. The catalysed reaction is 3-methyl-2-oxobutanoate + acetyl-CoA + H2O = (2S)-2-isopropylmalate + CoA + H(+). It functions in the pathway amino-acid biosynthesis; L-leucine biosynthesis; L-leucine from 3-methyl-2-oxobutanoate: step 1/4. Its function is as follows. Catalyzes the condensation of the acetyl group of acetyl-CoA with 3-methyl-2-oxobutanoate (2-ketoisovalerate) to form 3-carboxy-3-hydroxy-4-methylpentanoate (2-isopropylmalate). The chain is 2-isopropylmalate synthase from Ralstonia nicotianae (strain ATCC BAA-1114 / GMI1000) (Ralstonia solanacearum).